We begin with the raw amino-acid sequence, 146 residues long: Ecotin-like protein 1 (146 aa).

Belongs to the protease inhibitor I11 (ecotin) family.

In Leishmania infantum, this protein is Ecotin-like protein 1 (ISP1).